Consider the following 378-residue polypeptide: Zinc finger protein DPF3 (378 aa).

Residue Lys-99 forms a Glycyl lysine isopeptide (Lys-Gly) (interchain with G-Cter in SUMO2) linkage. A disordered region spans residues 145–193; sequence VLENDENVEEGNEEEDLEEDIPKRKNRTRGRARGSAGGRRRHDAASQED. Over residues 148–163 the composition is skewed to acidic residues; the sequence is NDENVEEGNEEEDLEE. The span at 168 to 186 shows a compositional bias: basic residues; that stretch reads RKNRTRGRARGSAGGRRRH. The segment at 198–221 adopts a C2H2-type zinc-finger fold; it reads YVCDICGKRYKNRPGLSYHYAHTH. Residues 225 to 254 form a disordered region; that stretch reads EEGDEAQDQETRSPPNHRNENHRPQKGPDG. 2 consecutive PHD-type zinc fingers follow at residues 259 to 319 and 316 to 366; these read NNYC…CKSC and CKSC…CWEL. The tract at residues 317–332 is interaction with HDGFL2; sequence KSCILCGTSENDDQLL. Phosphoserine is present on Gly-323.

The protein belongs to the requiem/DPF family. In terms of assembly, component of the BAF complex, which includes at least actin (ACTB), ARID1A, ARID1B/BAF250, SMARCA2, SMARCA4/BRG1/BAF190A, ACTL6A/BAF53, ACTL6B/BAF53B, SMARCE1/BAF57, SMARCC1/BAF155, SMARCC2/BAF170, SMARCB1/SNF5/INI1, and one or more of SMARCD1/BAF60A, SMARCD2/BAF60B, or SMARCD3/BAF60C. In muscle cells, the BAF complex also contains DPF3. Interacts with acetylated histones H3 and H4. Component of neuron-specific chromatin remodeling complex (nBAF complex) composed of at least, ARID1A/BAF250A or ARID1B/BAF250B, SMARCD1/BAF60A, SMARCD3/BAF60C, SMARCA2/BRM/BAF190B, SMARCA4/BRG1/BAF190A, SMARCB1/BAF47, SMARCC1/BAF155, SMARCE1/BAF57, SMARCC2/BAF170, DPF1/BAF45B, DPF3/BAF45C, ACTL6B/BAF53B and actin. As to quaternary structure, interacts with HDGFL2, SMARCA4/BRG1/BAF190A, SMARCC1/BAF155 and SMARCD1/BAF60A. Post-translationally, phosphorylation at Ser-323 enhances its interaction with HDGFL2.

Its subcellular location is the nucleus. In terms of biological role, belongs to the neuron-specific chromatin remodeling complex (nBAF complex). During neural development a switch from a stem/progenitor to a post-mitotic chromatin remodeling mechanism occurs as neurons exit the cell cycle and become committed to their adult state. The transition from proliferating neural stem/progenitor cells to post-mitotic neurons requires a switch in subunit composition of the npBAF and nBAF complexes. As neural progenitors exit mitosis and differentiate into neurons, npBAF complexes which contain ACTL6A/BAF53A and PHF10/BAF45A, are exchanged for homologous alternative ACTL6B/BAF53B and DPF1/BAF45B or DPF3/BAF45C subunits in neuron-specific complexes (nBAF). The npBAF complex is essential for the self-renewal/proliferative capacity of the multipotent neural stem cells. The nBAF complex along with CREST plays a role regulating the activity of genes essential for dendrite growth. Muscle-specific component of the BAF complex, a multiprotein complex involved in transcriptional activation and repression of select genes by chromatin remodeling (alteration of DNA-nucleosome topology). Specifically binds acetylated lysines on histone 3 and 4 (H3K14ac, H3K9ac, H4K5ac, H4K8ac, H4K12ac, H4K16ac). In the complex, it acts as a tissue-specific anchor between histone acetylations and methylations and chromatin remodeling. It thereby probably plays an essential role in heart and skeletal muscle development. Acts as a regulator of myogenesis in cooperation with HDGFL2. Mediates the interaction of HDGFL2 with the BAF complex. HDGFL2-DPF3a activate myogenic genes by increasing chromatin accessibility through recruitment of SMARCA4/BRG1/BAF190A (ATPase subunit of the BAF complex) to myogenic gene promoters. This is Zinc finger protein DPF3 (DPF3) from Homo sapiens (Human).